Reading from the N-terminus, the 311-residue chain is tRNA-cytidine(32) 2-sulfurtransferase (311 aa).

Residues S47–S52 carry the PP-loop motif motif. Residues C122, C125, and C213 each coordinate [4Fe-4S] cluster.

The protein belongs to the TtcA family. Homodimer. Mg(2+) serves as cofactor. Requires [4Fe-4S] cluster as cofactor.

Its subcellular location is the cytoplasm. The enzyme catalyses cytidine(32) in tRNA + S-sulfanyl-L-cysteinyl-[cysteine desulfurase] + AH2 + ATP = 2-thiocytidine(32) in tRNA + L-cysteinyl-[cysteine desulfurase] + A + AMP + diphosphate + H(+). The protein operates within tRNA modification. In terms of biological role, catalyzes the ATP-dependent 2-thiolation of cytidine in position 32 of tRNA, to form 2-thiocytidine (s(2)C32). The sulfur atoms are provided by the cysteine/cysteine desulfurase (IscS) system. This is tRNA-cytidine(32) 2-sulfurtransferase from Salmonella choleraesuis (strain SC-B67).